We begin with the raw amino-acid sequence, 396 residues long: DNA-directed RNA polymerase subunit 6 (396 aa).

Disordered stretches follow at residues 1–137 and 290–396; these read MSSK…DIED and NQQK…DYSE. 3 stretches are compositionally biased toward acidic residues: residues 21-53, 76-88, and 97-137; these read EYYD…DDEN, IDPD…DTDG, and EMGE…DIED. The segment covering 290–312 has biased composition (polar residues); the sequence is NQQKNSTTDTETLSTQENASTRV. Low complexity-rich tracts occupy residues 313 to 338 and 346 to 366; these read SGSN…SKSN and NSRT…SRTG. Positions 367–380 are enriched in basic residues; sequence SKSKKSSNTKSKSK. Residues 385–396 show a composition bias toward acidic residues; it reads NSDDSDYSDYSE.

This sequence belongs to the archaeal Rpo6/eukaryotic RPB6 RNA polymerase subunit family.

The catalysed reaction is RNA(n) + a ribonucleoside 5'-triphosphate = RNA(n+1) + diphosphate. Its function is as follows. DNA-dependent RNA polymerase catalyzes the transcription of DNA into RNA using the four ribonucleoside triphosphates as substrates. This Acanthamoeba polyphaga (Amoeba) protein is DNA-directed RNA polymerase subunit 6.